The following is a 300-amino-acid chain: Formyltetrahydrofolate deformylase (300 aa).

The ACT domain occupies 21-102; it reads RLLVSCPDQP…MTWSLTLASE (82 aa). Asp-244 is a catalytic residue.

It belongs to the PurU family.

The enzyme catalyses (6R)-10-formyltetrahydrofolate + H2O = (6S)-5,6,7,8-tetrahydrofolate + formate + H(+). It functions in the pathway purine metabolism; IMP biosynthesis via de novo pathway; formate from 10-formyl-5,6,7,8-tetrahydrofolate: step 1/1. In terms of biological role, catalyzes the hydrolysis of 10-formyltetrahydrofolate (formyl-FH4) to formate and tetrahydrofolate (FH4). This is Formyltetrahydrofolate deformylase from Bacillus subtilis (strain 168).